The following is a 602-amino-acid chain: Aspartate--tRNA(Asp/Asn) ligase (602 aa).

Position 187 (Glu-187) interacts with L-aspartate. The tract at residues 211–214 is aspartate; the sequence is QQFK. L-aspartate contacts are provided by Arg-233 and His-461. An ATP-binding site is contributed by 233–235; the sequence is RDE. Glu-495 contributes to the ATP binding site. Position 502 (Arg-502) interacts with L-aspartate. Residue 547-550 coordinates ATP; the sequence is GLDR.

Belongs to the class-II aminoacyl-tRNA synthetase family. Type 1 subfamily. Homodimer.

It is found in the cytoplasm. The catalysed reaction is tRNA(Asx) + L-aspartate + ATP = L-aspartyl-tRNA(Asx) + AMP + diphosphate. Its function is as follows. Aspartyl-tRNA synthetase with relaxed tRNA specificity since it is able to aspartylate not only its cognate tRNA(Asp) but also tRNA(Asn). Reaction proceeds in two steps: L-aspartate is first activated by ATP to form Asp-AMP and then transferred to the acceptor end of tRNA(Asp/Asn). This is Aspartate--tRNA(Asp/Asn) ligase from Chlorobium phaeovibrioides (strain DSM 265 / 1930) (Prosthecochloris vibrioformis (strain DSM 265)).